We begin with the raw amino-acid sequence, 118 residues long: MPRVKRGVTARARHKKVLKLAKGYYGARSRTYRVAVQAVTKAGQYAYRDRRQKKRQFRQLWIARINAAARQNGLSYSRFINGLKKASIEIDRKILADIAVFDKVVFATLVEKAKEALN.

The protein belongs to the bacterial ribosomal protein bL20 family.

Binds directly to 23S ribosomal RNA and is necessary for the in vitro assembly process of the 50S ribosomal subunit. It is not involved in the protein synthesizing functions of that subunit. This chain is Large ribosomal subunit protein bL20, found in Shewanella baltica (strain OS223).